The sequence spans 337 residues: Phosphate acyltransferase (337 aa).

This sequence belongs to the PlsX family. Homodimer. Probably interacts with PlsY.

Its subcellular location is the cytoplasm. It catalyses the reaction a fatty acyl-[ACP] + phosphate = an acyl phosphate + holo-[ACP]. It participates in lipid metabolism; phospholipid metabolism. In terms of biological role, catalyzes the reversible formation of acyl-phosphate (acyl-PO(4)) from acyl-[acyl-carrier-protein] (acyl-ACP). This enzyme utilizes acyl-ACP as fatty acyl donor, but not acyl-CoA. This is Phosphate acyltransferase from Ehrlichia chaffeensis (strain ATCC CRL-10679 / Arkansas).